The chain runs to 212 residues: Ribonuclease HII (212 aa).

One can recognise an RNase H type-2 domain in the interval 1 to 206; that stretch reads MICGVDEAGK…VKNLLHQKNQ (206 aa). Residues Asp-6, Glu-7, and Asp-101 each coordinate a divalent metal cation.

The protein belongs to the RNase HII family. Requires Mn(2+) as cofactor. Mg(2+) serves as cofactor.

It is found in the cytoplasm. It carries out the reaction Endonucleolytic cleavage to 5'-phosphomonoester.. Endonuclease that specifically degrades the RNA of RNA-DNA hybrids. The protein is Ribonuclease HII of Methanospirillum hungatei JF-1 (strain ATCC 27890 / DSM 864 / NBRC 100397 / JF-1).